Consider the following 468-residue polypeptide: Trehalose-binding lipoprotein LpqY (468 aa).

The N-terminal stretch at 1 to 25 (MVMSRGRIPRLGAAVLVALTTAAAA) is a signal peptide. C26 carries N-palmitoyl cysteine lipidation. C26 is lipidated: S-diacylglycerol cysteine. Residues C54 and C372 are joined by a disulfide bond. Alpha,alpha-trehalose-binding residues include D97, N151, W276, F278, G351, and R421.

Belongs to the bacterial solute-binding protein 1 family. Monomer. The complex is composed of two ATP-binding proteins (SugC), two transmembrane proteins (SugA and SugB) and a solute-binding protein (LpqY).

Its subcellular location is the cell inner membrane. Functionally, part of the ABC transporter complex LpqY-SugA-SugB-SugC, which is highly specific for uptake of trehalose. Involved in the recycling of extracellular trehalose released from trehalose-containing molecules synthesized by M.tuberculosis. Trehalose uptake is essential for virulence. The protein is Trehalose-binding lipoprotein LpqY (lpqY) of Mycobacterium tuberculosis (strain CDC 1551 / Oshkosh).